A 314-amino-acid chain; its full sequence is Oxalate oxidoreductase subunit beta (314 aa).

Cys24, Cys27, Cys52, and Cys225 together coordinate [4Fe-4S] cluster.

In terms of assembly, dimer of heterotrimer of one alpha, one beta and one delta subunit. [4Fe-4S] cluster serves as cofactor.

It carries out the reaction oxidized 2[4Fe-4S]-[ferredoxin] + oxalate = reduced 2[4Fe-4S]-[ferredoxin] + 2 CO2. In terms of biological role, catalyzes the anaerobic oxidation of oxalate using a broad range of electron acceptors, including ferredoxin and the nickel-dependent carbon monoxide dehydrogenase. Does not require coenzyme A as cosubstrate. Enables anaerobic growth on oxalate which is used as energy source by the bacteria. This chain is Oxalate oxidoreductase subunit beta, found in Moorella thermoacetica (strain ATCC 39073 / JCM 9320).